A 316-amino-acid polypeptide reads, in one-letter code: N-acetylmuramic acid 6-phosphate etherase (316 aa).

In terms of domain architecture, SIS spans 68–231 (ITDRLRSGGR…STCAMVRLGK (164 aa)). The active-site Proton donor is Glu96. Residue Glu127 is part of the active site.

This sequence belongs to the GCKR-like family. MurNAc-6-P etherase subfamily. In terms of assembly, homodimer.

The enzyme catalyses N-acetyl-D-muramate 6-phosphate + H2O = N-acetyl-D-glucosamine 6-phosphate + (R)-lactate. It participates in amino-sugar metabolism; N-acetylmuramate degradation. Functionally, specifically catalyzes the cleavage of the D-lactyl ether substituent of MurNAc 6-phosphate, producing GlcNAc 6-phosphate and D-lactate. In Prochlorococcus marinus (strain MIT 9313), this protein is N-acetylmuramic acid 6-phosphate etherase.